The primary structure comprises 175 residues: ADP-ribosylation factor 6 (175 aa).

Glycine 2 is lipidated: N-myristoyl glycine. A lipid anchor (N6-myristoyl lysine) is attached at lysine 3. Residues 23–28 (AAGKTT), 41–44 (TIPT), 63–67 (DVGGQ), 122–125 (NKQD), and 155–156 (CA) each bind GTP.

This sequence belongs to the small GTPase superfamily. Arf family.

Its subcellular location is the cytoplasm. It localises to the cytosol. The protein resides in the cell membrane. The protein localises to the endosome membrane. It is found in the recycling endosome membrane. Its subcellular location is the cell projection. It localises to the filopodium membrane. The protein resides in the ruffle. The protein localises to the cleavage furrow. It is found in the midbody. Its subcellular location is the midbody ring. The enzyme catalyses GTP + H2O = GDP + phosphate + H(+). Functionally, GTP-binding protein involved in protein trafficking; regulates endocytic recycling and cytoskeleton remodeling. May modulate vesicle budding and uncoating within the Golgi apparatus. May contribute to the regulation of dendritic branching, filopodia extension and dendritic spine development. The sequence is that of ADP-ribosylation factor 6 (ARF6) from Gallus gallus (Chicken).